Reading from the N-terminus, the 242-residue chain is Probable transcriptional regulatory protein HEAR0561 (242 aa).

Belongs to the TACO1 family.

The protein localises to the cytoplasm. The sequence is that of Probable transcriptional regulatory protein HEAR0561 from Herminiimonas arsenicoxydans.